The following is a 443-amino-acid chain: 23S rRNA (uracil(1939)-C(5))-methyltransferase RlmD (443 aa).

The TRAM domain maps to 4-66 (QNRFDRTSFQ…RHFDEARVVE (63 aa)). [4Fe-4S] cluster-binding residues include C79, C85, C88, and C167. S-adenosyl-L-methionine-binding residues include Q275, F304, N309, E325, D352, and D373. Catalysis depends on C399, which acts as the Nucleophile.

Belongs to the class I-like SAM-binding methyltransferase superfamily. RNA M5U methyltransferase family. RlmD subfamily.

It catalyses the reaction uridine(1939) in 23S rRNA + S-adenosyl-L-methionine = 5-methyluridine(1939) in 23S rRNA + S-adenosyl-L-homocysteine + H(+). Functionally, catalyzes the formation of 5-methyl-uridine at position 1939 (m5U1939) in 23S rRNA. In Xylella fastidiosa (strain Temecula1 / ATCC 700964), this protein is 23S rRNA (uracil(1939)-C(5))-methyltransferase RlmD.